We begin with the raw amino-acid sequence, 435 residues long: Monodehydroascorbate reductase 2 (435 aa).

FAD-binding positions include 14-17 (GGVA), glutamate 41, arginine 48, lysine 53, isoleucine 96, and 147-148 (RE). Residues 172-178 (GGYIGLE), glutamate 196, arginine 202, and glycine 261 each bind NAD(+). Residue 174–178 (YIGLE) participates in NADP(+) binding. Positions 202 and 261 each coordinate NADP(+). Aspartate 298 contributes to the FAD binding site. 314 to 315 (EH) serves as a coordination point for NAD(+). 314–315 (EH) provides a ligand contact to NADP(+). Valine 316 is an FAD binding site. Arginine 320 contributes to the L-ascorbate binding site. Tyrosine 349 contacts FAD. Tyrosine 349 contributes to the NAD(+) binding site. Tyrosine 349 is a binding site for NADP(+). Arginine 351 contributes to the L-ascorbate binding site. Position 417 is a phosphoserine (serine 417).

Belongs to the FAD-dependent oxidoreductase family. Requires FAD as cofactor.

Its subcellular location is the cytoplasm. The catalysed reaction is 2 monodehydro-L-ascorbate radical + NADH + H(+) = 2 L-ascorbate + NAD(+). Functionally, catalyzes the conversion of monodehydroascorbate to ascorbate, oxidizing NADH in the process. This is Monodehydroascorbate reductase 2 from Arabidopsis thaliana (Mouse-ear cress).